We begin with the raw amino-acid sequence, 956 residues long: Valine--tRNA ligase (956 aa).

Positions 69-79 match the 'HIGH' region motif; that stretch reads PNITGVLHMGH. Residues 566-570 carry the 'KMSKS' region motif; the sequence is KMSKS. Lys569 lines the ATP pocket. Residues 885–911 adopt a coiled-coil conformation; the sequence is LCARLQKAWQKARQKVQQVERKLADAQ.

It belongs to the class-I aminoacyl-tRNA synthetase family. ValS type 1 subfamily. Monomer.

It localises to the cytoplasm. It carries out the reaction tRNA(Val) + L-valine + ATP = L-valyl-tRNA(Val) + AMP + diphosphate. Functionally, catalyzes the attachment of valine to tRNA(Val). As ValRS can inadvertently accommodate and process structurally similar amino acids such as threonine, to avoid such errors, it has a 'posttransfer' editing activity that hydrolyzes mischarged Thr-tRNA(Val) in a tRNA-dependent manner. The sequence is that of Valine--tRNA ligase from Treponema pallidum (strain Nichols).